A 160-amino-acid chain; its full sequence is MAELSSLAELGAATGNTNTQAAAPVHVQKLDKSGRAYATGKRKNAIARVWVKPGSGKIVVNDKEFATYFARPVLQMILNQPIIASNRSGQYDIVATVVGGGLSGQAGAVRHGISKALTYYEPALRAVLKKGGFLTRDSRVVERKKYGKAKARRSFQFSKR.

Belongs to the universal ribosomal protein uS9 family.

The sequence is that of Small ribosomal subunit protein uS9 from Mesorhizobium japonicum (strain LMG 29417 / CECT 9101 / MAFF 303099) (Mesorhizobium loti (strain MAFF 303099)).